We begin with the raw amino-acid sequence, 156 residues long: Small ribosomal subunit protein uS7 (156 aa).

The protein belongs to the universal ribosomal protein uS7 family. As to quaternary structure, part of the 30S ribosomal subunit. Contacts proteins S9 and S11.

Its function is as follows. One of the primary rRNA binding proteins, it binds directly to 16S rRNA where it nucleates assembly of the head domain of the 30S subunit. Is located at the subunit interface close to the decoding center, probably blocks exit of the E-site tRNA. The sequence is that of Small ribosomal subunit protein uS7 from Crocosphaera subtropica (strain ATCC 51142 / BH68) (Cyanothece sp. (strain ATCC 51142)).